The following is a 505-amino-acid chain: Maturase K (505 aa).

Belongs to the intron maturase 2 family. MatK subfamily.

Its subcellular location is the plastid. The protein localises to the chloroplast. Usually encoded in the trnK tRNA gene intron. Probably assists in splicing its own and other chloroplast group II introns. The chain is Maturase K from Rhizophora stylosa (Bakau).